A 676-amino-acid chain; its full sequence is DNA-directed RNA polymerase subunit beta' (676 aa).

Zn(2+)-binding residues include C69, C71, C87, and C90. Residues D485, D487, and D489 each contribute to the Mg(2+) site.

This sequence belongs to the RNA polymerase beta' chain family. RpoC1 subfamily. In terms of assembly, in plastids the minimal PEP RNA polymerase catalytic core is composed of four subunits: alpha, beta, beta', and beta''. When a (nuclear-encoded) sigma factor is associated with the core the holoenzyme is formed, which can initiate transcription. Requires Mg(2+) as cofactor. Zn(2+) is required as a cofactor.

It is found in the plastid. It localises to the chloroplast. It catalyses the reaction RNA(n) + a ribonucleoside 5'-triphosphate = RNA(n+1) + diphosphate. DNA-dependent RNA polymerase catalyzes the transcription of DNA into RNA using the four ribonucleoside triphosphates as substrates. The sequence is that of DNA-directed RNA polymerase subunit beta' from Fagopyrum esculentum subsp. ancestrale (Wild buckwheat).